The primary structure comprises 190 residues: Crossover junction endodeoxyribonuclease RuvC (190 aa).

Catalysis depends on residues Asp8, Glu67, and Asp139. Residues Asp8, Glu67, and Asp139 each coordinate Mg(2+).

The protein belongs to the RuvC family. As to quaternary structure, homodimer which binds Holliday junction (HJ) DNA. The HJ becomes 2-fold symmetrical on binding to RuvC with unstacked arms; it has a different conformation from HJ DNA in complex with RuvA. In the full resolvosome a probable DNA-RuvA(4)-RuvB(12)-RuvC(2) complex forms which resolves the HJ. Mg(2+) is required as a cofactor.

The protein resides in the cytoplasm. The enzyme catalyses Endonucleolytic cleavage at a junction such as a reciprocal single-stranded crossover between two homologous DNA duplexes (Holliday junction).. The RuvA-RuvB-RuvC complex processes Holliday junction (HJ) DNA during genetic recombination and DNA repair. Endonuclease that resolves HJ intermediates. Cleaves cruciform DNA by making single-stranded nicks across the HJ at symmetrical positions within the homologous arms, yielding a 5'-phosphate and a 3'-hydroxyl group; requires a central core of homology in the junction. The consensus cleavage sequence is 5'-(A/T)TT(C/G)-3'. Cleavage occurs on the 3'-side of the TT dinucleotide at the point of strand exchange. HJ branch migration catalyzed by RuvA-RuvB allows RuvC to scan DNA until it finds its consensus sequence, where it cleaves and resolves the cruciform DNA. The protein is Crossover junction endodeoxyribonuclease RuvC of Pasteurella multocida (strain Pm70).